A 513-amino-acid chain; its full sequence is Sulfhydryl oxidase 1 (513 aa).

An N-terminal signal peptide occupies residues 1 to 30 (MAAAAVARRVVLVLVLAAASLAAAPRGAAA). The Thioredoxin domain occupies 31 to 174 (RSLGGREGPG…LLKWINNQMK (144 aa)). Asparagine 51 carries an N-linked (GlcNAc...) asparagine glycan. Residues cysteine 76 and cysteine 79 each act as nucleophile in the active site. A disulfide bridge connects residues cysteine 76 and cysteine 79. N-linked (GlcNAc...) asparagine glycosylation is found at asparagine 193 and asparagine 266. A disulfide bridge links cysteine 301 with cysteine 313. Residues 304 to 406 (SKSETRGFSC…GDPLFPKVTW (103 aa)) form the ERV/ALR sulfhydryl oxidase domain. Residues arginine 309, tryptophan 316, histidine 320, glutamate 350, histidine 354, 377-384 (WSTHNKVN), lysine 403, and tryptophan 406 each bind FAD. Residues cysteine 348 and cysteine 351 are joined by a disulfide bond. The cysteines at positions 412 and 415 are disulfide-linked.

FAD is required as a cofactor.

The protein resides in the secreted. It catalyses the reaction 2 R'C(R)SH + O2 = R'C(R)S-S(R)CR' + H2O2. Functionally, catalyzes the oxidation of sulfhydryl groups in peptide and protein thiols to disulfides with the reduction of oxygen to hydrogen peroxide. May contribute to disulfide bond formation in a variety of secreted proteins. This Oryza sativa subsp. japonica (Rice) protein is Sulfhydryl oxidase 1 (QSOX1).